A 249-amino-acid chain; its full sequence is uncharacterized protein (249 aa).

Positions 1–20 (MSNQNKVLSLGLLLLAAVAA) are cleaved as a signal peptide.

The protein belongs to the IIV-6 117L family.

This is an uncharacterized protein from Acheta domesticus (House cricket).